We begin with the raw amino-acid sequence, 450 residues long: Ammonium transporter Rh type A (450 aa).

Residues 1–4 (MRFK) lie on the Cytoplasmic side of the membrane. Residues 5–25 (FSLIALSLEVVMIVSFALFVE) traverse the membrane as a helical segment. The Extracellular segment spans residues 26–72 (YETSQNGSQKSASQQNASQQNAAAQQNASQQGNASSPAKEDQFFQLY). N-linked (GlcNAc...) asparagine glycosylation is found at N31, N41, N52, and N58. The disordered stretch occupies residues 34 to 61 (QKSASQQNASQQNAAAQQNASQQGNASS). The helical transmembrane segment at 73-93 (PLFQHVHVMIFVGFGFLMTFL) threads the bilayer. Topologically, residues 94-97 (KKYG) are cytoplasmic. A helical membrane pass occupies residues 98 to 118 (FSGVGFNLFLAALGLQWGTIV). The Extracellular portion of the chain corresponds to 119–134 (QGLLHSHGLKFPFRIK). A helical transmembrane segment spans residues 135–155 (NMINADFSTATVLISFGAVLG). Residues 156 to 159 (KTSP) lie on the Cytoplasmic side of the membrane. The chain crosses the membrane as a helical span at residues 160 to 180 (IQMIIMTILEIAVFAGNEHLV). Over 181–189 (TEIFKASDT) the chain is Extracellular. The chain crosses the membrane as a helical span at residues 190–210 (GASMTIHAFGAYFGLAVAGVL). Residues 211-229 (YRSGLKHGHPNEESVYHSD) lie on the Cytoplasmic side of the membrane. The helical transmembrane segment at 230 to 250 (LFAMIGTLFLWMFWPSFNSAI) threads the bilayer. The Extracellular portion of the chain corresponds to 251-260 (AQPENNQYRA). A helical membrane pass occupies residues 261-281 (IVNTYMSLAACVITAYALSSL). Residues 282–289 (VERRGRLD) lie on the Cytoplasmic side of the membrane. The chain crosses the membrane as a helical span at residues 290–307 (MVHIQNATLAGGVAVGTC). Residues 308 to 311 (ADME) are Extracellular-facing. The chain crosses the membrane as a helical span at residues 312 to 332 (IPLYFAMTIGSIAGIISVLGY). Over 333 to 349 (KFLSPLLAHKLMIHDTC) the chain is Cytoplasmic. A helical membrane pass occupies residues 350–370 (GVHNLHGLPGVFGGLASIVAI). Over 371–384 (SWGKSTVSTMAMQA) the chain is Extracellular. The chain crosses the membrane as a helical span at residues 385 to 405 (TALGSSIGSAIVGGLVTGLIL). The Cytoplasmic segment spans residues 406–450 (KLPVWNQPPDEYCFDDSVSWKVPKYRELDNYFFQHVTHNHVEHEV).

It belongs to the ammonium transporter (TC 2.A.49) family. Rh subfamily. Homodimer. Heterotrimer; a RHCE monomer interacts with a RHAG homodimer. Component of the ankyrin-1 complex in the erythrocyte, composed of ANK1, RHCE, RHAG, SLC4A1, EPB42, GYPA, GYPB and AQP1. Interacts with GYPB (via the N-terminal); this interaction bridges the (RHAG)2(RHCE) heterotrimer with the SLC4A1 Band 3 I dimer complexed with GYPA. Post-translationally, glycosylated.

The protein localises to the membrane. It catalyses the reaction methylamine(out) = methylamine(in). The enzyme catalyses NH4(+)(in) = NH4(+)(out). It carries out the reaction CO2(out) = CO2(in). Functionally, component of the ankyrin-1 complex, a multiprotein complex involved in the stability and shape of the erythrocyte membrane. Heterotrimer with RHCE (RHAG)2(RHCE), that transports ammonium and its related derivative methylammonium, in both neutral and ionic forms, across the erythrocyte membrane. The transport of NH4(+) is electrogenic and masks the NH3 transport. Also, may act as a CO2 channel. Moreover in erythrocyte, regulates RHD membrane expression and is associated with rhesus blood group antigen expression. The polypeptide is Ammonium transporter Rh type A (Rattus norvegicus (Rat)).